Consider the following 387-residue polypeptide: tRNA-specific 2-thiouridylase MnmA (387 aa).

ATP-binding positions include alanine 34–serine 41 and methionine 60. Cysteine 127 serves as the catalytic Nucleophile. An intrachain disulfide couples cysteine 127 to cysteine 223. Residue glycine 151 participates in ATP binding. The segment at lysine 173–glutamine 175 is interaction with tRNA. Cysteine 223 functions as the Cysteine persulfide intermediate in the catalytic mechanism.

This sequence belongs to the MnmA/TRMU family.

Its subcellular location is the cytoplasm. The catalysed reaction is S-sulfanyl-L-cysteinyl-[protein] + uridine(34) in tRNA + AH2 + ATP = 2-thiouridine(34) in tRNA + L-cysteinyl-[protein] + A + AMP + diphosphate + H(+). In terms of biological role, catalyzes the 2-thiolation of uridine at the wobble position (U34) of tRNA, leading to the formation of s(2)U34. The chain is tRNA-specific 2-thiouridylase MnmA from Anaplasma marginale (strain St. Maries).